Reading from the N-terminus, the 185-residue chain is UPF0301 protein HDEF_0602 (185 aa).

The protein belongs to the UPF0301 (AlgH) family.

In Hamiltonella defensa subsp. Acyrthosiphon pisum (strain 5AT), this protein is UPF0301 protein HDEF_0602.